The sequence spans 3391 residues: Genome polyprotein (3391 aa).

The interval 1–15 (MNDQRKKAKNTPFNM) is interaction with host EXOC1. The Cytoplasmic portion of the chain corresponds to 1-101 (MNDQRKKAKN…LNILNRRRRS (101 aa)). The interval 37-72 (MLQGRGPLKLYMALVAFLRFLTIPPTAGILKRWGTI) is hydrophobic; homodimerization of capsid protein C. A propeptide spans 101–114 (SAGMIIMLIPTVMA) (ER anchor for the capsid protein C, removed in mature form by serine protease NS3). A helical transmembrane segment spans residues 102–119 (AGMIIMLIPTVMAFHLTT). The Extracellular portion of the chain corresponds to 120-242 (RNGEPHMIVS…HVQRIETWIL (123 aa)). N-linked (GlcNAc...) asparagine; by host glycosylation occurs at Asn-183. Residues 243–260 (RHPGFTMMAAILAYTIGT) form a helical membrane-spanning segment. A topological domain (cytoplasmic) is located at residue Thr-261. The helical transmembrane segment at 262 to 280 (HFQRALIFILLTAVTPSMT) threads the bilayer. The Extracellular portion of the chain corresponds to 281-725 (MRCIGMSNRD…LHQVFGAIYG (445 aa)). 4 disulfide bridges follow: Cys-283–Cys-310, Cys-340–Cys-401, Cys-354–Cys-385, and Cys-372–Cys-396. An N-linked (GlcNAc...) asparagine; by host glycan is attached at Asn-347. Residues 378-391 (DRGWGNGCGLFGKG) form a fusion peptide region. An N-linked (GlcNAc...) asparagine; by host glycan is attached at Asn-433. 2 cysteine pairs are disulfide-bonded: Cys-465-Cys-565 and Cys-582-Cys-613. The helical transmembrane segment at 726–746 (AAFSGVSWTMKILIGVIITWI) threads the bilayer. The Cytoplasmic segment spans residues 747 to 752 (GMNSRS). The helical transmembrane segment at 753 to 773 (TSLSVTLVLVGIVTLYLGVMV) threads the bilayer. The Extracellular segment spans residues 774-1195 (QADSGCVVSW…MVGATMTDDI (422 aa)). 6 cysteine pairs are disulfide-bonded: Cys-779-Cys-790, Cys-830-Cys-918, Cys-954-Cys-998, Cys-1055-Cys-1104, Cys-1066-Cys-1088, and Cys-1087-Cys-1091. Asn-905 and Asn-982 each carry an N-linked (GlcNAc...) asparagine; by host glycan. N-linked (GlcNAc...) asparagine; by host glycans are attached at residues Asn-1134 and Asn-1174. A helical membrane pass occupies residues 1196-1220 (GMGVTYLALLAAFKVRPTFAAGLLL). At 1221-1226 (RKLTSK) the chain is on the cytoplasmic side. Residues 1227–1245 (ALMMTTIGIVLSSQSTTPE) traverse the membrane as a helical segment. Residues 1246 to 1269 (TILELTDALALGMMVLKMVRNMEK) are Lumenal-facing. The helical transmembrane segment at 1270–1290 (YQLAVTIMAILCVPNAVILQN) threads the bilayer. Ala-1291 is a topological domain (cytoplasmic). The helical transmembrane segment at 1292–1310 (WKVSCTILAVVSVSPLFLT) threads the bilayer. At 1311 to 1317 (SSQQKTD) the chain is on the lumenal side. Residues 1318–1338 (WIPLALTIKGLNPTAIFLTTL) form a helical membrane-spanning segment. At 1339 to 1346 (SRTSKKRS) the chain is on the cytoplasmic side. Residues 1347 to 1367 (WPLNEAIMAVGMVSILASSLL) traverse the membrane as a helical segment. Residues 1368-1370 (KND) lie on the Lumenal side of the membrane. A helical transmembrane segment spans residues 1371-1391 (IPMTGPLVAGGPLTVCYVLTG). Residues 1392-1447 (RSADLELERAADVKWEDQAEISGSSPILSITISEDGSMSIKNEEEEQTLTILIRTG) lie on the Cytoplasmic side of the membrane. Residues 1398–1437 (LERAADVKWEDQAEISGSSPILSITISEDGSMSIKNEEEE) form an interacts with and activates NS3 protease region. The helical intramembrane region spans 1448–1468 (LLVISGLFPVSIPITAAAWYL). Over 1469–2147 (WEVKKQRAGV…LSELPETLET (679 aa)) the chain is Cytoplasmic. Residues 1476–1653 (AGVLWDVPSP…EKSIEDNPEI (178 aa)) form the Peptidase S7 domain. Active-site charge relay system; for serine protease NS3 activity residues include His-1526, Asp-1550, and Ser-1610. Positions 1655–1811 (DDIFRKRRLT…QSNAPIIDEE (157 aa)) constitute a Helicase ATP-binding domain. An important for RNA-binding region spans residues 1659-1662 (RKRR). 1668–1675 (LHPGAGKT) serves as a coordination point for ATP. A DEAH box motif is present at residues 1759–1762 (DEAH). The 168-residue stretch at 1821 to 1988 (SGHEWVTDFK…IIPSMFEPER (168 aa)) folds into the Helicase C-terminal domain. Residue Lys-1863 is modified to N6-acetyllysine; by host. The helical transmembrane segment at 2148–2168 (LLLLTLLATVTGGILLFLMSG) threads the bilayer. The Lumenal portion of the chain corresponds to 2169–2170 (RG). Positions 2171–2191 (IGKMTLGMCCIITASILLWYA) form an intramembrane region, helical. Gln-2192 is a topological domain (lumenal). A helical membrane pass occupies residues 2193–2213 (IQPHWIAASIILEFFLIVLLI). At 2214-2228 (PEPEKQRTPQDNQLT) the chain is on the cytoplasmic side. A helical membrane pass occupies residues 2229–2249 (YVVIAILTVVAATMANEMGFL). Over 2250 to 2274 (EKTKKDLGLGSIATQQPESNILDID) the chain is Lumenal. The helical intramembrane region spans 2275-2295 (LRPASAWTLYAVATTFVTPML). Residues 2296–2316 (RHSIENSSVNVSLTAIANQAT) lie on the Lumenal side of the membrane. N-linked (GlcNAc...) asparagine; by host glycosylation is found at Asn-2301 and Asn-2305. Residues 2317-2337 (VLMGLGKGWPLSKMDIGVPLL) constitute an intramembrane region (helical). Over 2338 to 2347 (AIGCYSQVNP) the chain is Lumenal. Residues 2348–2368 (TTLTAALFLLVAHYAIIGPAL) traverse the membrane as a helical segment. The Cytoplasmic portion of the chain corresponds to 2369-2413 (QAKASREAQKRAAAGIMKNPTVDGITVIDLDPIPYDPKFEKQLGQ). Residues 2414 to 2434 (VMLLVLCVTQVLMMRTTWALC) traverse the membrane as a helical segment. The Lumenal portion of the chain corresponds to 2435-2459 (EVLTLATGPISTLWEGNPGRFWNTT). Asn-2457 carries an N-linked (GlcNAc...) asparagine; by host glycan. The chain crosses the membrane as a helical span at residues 2460 to 2480 (IAVSMANIFRGSYLAGAGLLF). At 2481–3391 (SIMKNTTNAR…REEEEAGVLW (911 aa)) the chain is on the cytoplasmic side. One can recognise an mRNA cap 0-1 NS5-type MT domain in the interval 2493–2755 (TGNIGETLGE…DVDLGSGTRN (263 aa)). Residue Ser-2547 coordinates S-adenosyl-L-methionine. Residue Ser-2547 is modified to Phosphoserine. Lys-2552 (for 2'-O-MTase activity) is an active-site residue. The SUMO-interacting motif signature appears at 2568-2571 (VVDL). S-adenosyl-L-methionine-binding residues include Gly-2577, Trp-2578, Thr-2595, Lys-2596, Asp-2622, and Val-2623. Asp-2637 serves as the catalytic For 2'-O-MTase activity. Ile-2638 contacts S-adenosyl-L-methionine. Residues Lys-2672 and Glu-2708 each act as for 2'-O-MTase activity in the active site. Tyr-2710 provides a ligand contact to S-adenosyl-L-methionine. Residues Glu-2929, His-2933, Cys-2938, and Cys-2941 each contribute to the Zn(2+) site. The region spanning 3020–3169 (AMYADDTAGW…PLDDRLPSAL (150 aa)) is the RdRp catalytic domain. Zn(2+)-binding residues include His-3203, Cys-3219, and Cys-3338.

The protein in the N-terminal section; belongs to the class I-like SAM-binding methyltransferase superfamily. mRNA cap 0-1 NS5-type methyltransferase family. In terms of assembly, homodimer. Interacts (via N-terminus) with host EXOC1 (via C-terminus); this interaction results in EXOC1 degradation through the proteasome degradation pathway. Forms heterodimers with envelope protein E in the endoplasmic reticulum and Golgi. As to quaternary structure, homodimer; in the endoplasmic reticulum and Golgi. Interacts with protein prM. Interacts with non-structural protein 1. In terms of assembly, homodimer; Homohexamer when secreted. Interacts with envelope protein E. Interacts with host PRKAA1. Interacts (via N-terminus) with serine protease NS3. As to quaternary structure, forms a heterodimer with serine protease NS3. May form homooligomers. In terms of assembly, forms a heterodimer with NS2B. Interacts with NS4B. Interacts with unphosphorylated RNA-directed RNA polymerase NS5; this interaction stimulates RNA-directed RNA polymerase NS5 guanylyltransferase activity. Interacts with host SHFL. Interacts with host MAVS; this interaction inhibits the synthesis of IFN-beta. Interacts with host SHFL. Interacts with host AUP1; the interaction occurs in the presence of Dengue virus NS4B and induces lipophagy which facilitates production of virus progeny particles. May interact with host SRPRA and SEC61G. As to quaternary structure, interacts with serine protease NS3. In terms of assembly, homodimer. Interacts with host STAT2; this interaction inhibits the phosphorylation of the latter, and, when all viral proteins are present (polyprotein), targets STAT2 for degradation. Interacts with serine protease NS3. Interacts with host PAF1 complex; the interaction may prevent the recruitment of the PAF1 complex to interferon-responsive genes, and thus reduces the immune response. In terms of processing, specific enzymatic cleavages in vivo yield mature proteins. Cleavages in the lumen of endoplasmic reticulum are performed by host signal peptidase, whereas cleavages in the cytoplasmic side are performed by serine protease NS3. Signal cleavage at the 2K-4B site requires a prior NS3 protease-mediated cleavage at the 4A-2K site. Cleaved in post-Golgi vesicles by a host furin, releasing the mature small envelope protein M, and peptide pr. This cleavage is incomplete as up to 30% of viral particles still carry uncleaved prM. Post-translationally, N-glycosylated. In terms of processing, N-glycosylated. The excreted form is glycosylated and this is required for efficient secretion of the protein from infected cells. Acetylated by host KAT5. Acetylation modulates NS3 RNA-binding and unwinding activities and plays an important positive role for viral replication. Post-translationally, sumoylation of RNA-directed RNA polymerase NS5 increases NS5 protein stability allowing proper viral RNA replication. In terms of processing, phosphorylated on serines residues. This phosphorylation may trigger NS5 nuclear localization.

The protein localises to the virion. It is found in the host nucleus. It localises to the host cytoplasm. The protein resides in the host perinuclear region. Its subcellular location is the secreted. The protein localises to the virion membrane. It is found in the host endoplasmic reticulum membrane. It localises to the host mitochondrion. The enzyme catalyses Selective hydrolysis of -Xaa-Xaa-|-Yaa- bonds in which each of the Xaa can be either Arg or Lys and Yaa can be either Ser or Ala.. It catalyses the reaction RNA(n) + a ribonucleoside 5'-triphosphate = RNA(n+1) + diphosphate. The catalysed reaction is a ribonucleoside 5'-triphosphate + H2O = a ribonucleoside 5'-diphosphate + phosphate + H(+). It carries out the reaction ATP + H2O = ADP + phosphate + H(+). The enzyme catalyses a 5'-end (5'-triphosphoguanosine)-ribonucleoside in mRNA + S-adenosyl-L-methionine = a 5'-end (N(7)-methyl 5'-triphosphoguanosine)-ribonucleoside in mRNA + S-adenosyl-L-homocysteine. It catalyses the reaction a 5'-end (N(7)-methyl 5'-triphosphoguanosine)-ribonucleoside in mRNA + S-adenosyl-L-methionine = a 5'-end (N(7)-methyl 5'-triphosphoguanosine)-(2'-O-methyl-ribonucleoside) in mRNA + S-adenosyl-L-homocysteine + H(+). Functionally, plays a role in virus budding by binding to the cell membrane and gathering the viral RNA into a nucleocapsid that forms the core of a mature virus particle. During virus entry, may induce genome penetration into the host cytoplasm after hemifusion induced by the surface proteins. Can migrate to the cell nucleus where it modulates host functions. Overcomes the anti-viral effects of host EXOC1 by sequestering and degrading the latter through the proteasome degradation pathway. In terms of biological role, inhibits RNA silencing by interfering with host Dicer. Prevents premature fusion activity of envelope proteins in trans-Golgi by binding to envelope protein E at pH6.0. After virion release in extracellular space, gets dissociated from E dimers. Its function is as follows. Acts as a chaperone for envelope protein E during intracellular virion assembly by masking and inactivating envelope protein E fusion peptide. prM is the only viral peptide matured by host furin in the trans-Golgi network probably to avoid catastrophic activation of the viral fusion activity in acidic Golgi compartment prior to virion release. prM-E cleavage is inefficient, and many virions are only partially matured. These uncleaved prM would play a role in immune evasion. Functionally, may play a role in virus budding. Exerts cytotoxic effects by activating a mitochondrial apoptotic pathway through M ectodomain. May display a viroporin activity. In terms of biological role, binds to host cell surface receptor and mediates fusion between viral and cellular membranes. Envelope protein is synthesized in the endoplasmic reticulum in the form of heterodimer with protein prM. They play a role in virion budding in the ER, and the newly formed immature particle is covered with 60 spikes composed of heterodimer between precursor prM and envelope protein E. The virion is transported to the Golgi apparatus where the low pH causes dissociation of PrM-E heterodimers and formation of E homodimers. prM-E cleavage is inefficient, and many virions are only partially matured. These uncleaved prM would play a role in immune evasion. Involved in immune evasion, pathogenesis and viral replication. Once cleaved off the polyprotein, is targeted to three destinations: the viral replication cycle, the plasma membrane and the extracellular compartment. Essential for viral replication. Required for formation of the replication complex and recruitment of other non-structural proteins to the ER-derived membrane structures. Excreted as a hexameric lipoparticle that plays a role against host immune response. Antagonizing the complement function. Binds to the host macrophages and dendritic cells. Inhibits signal transduction originating from Toll-like receptor 3 (TLR3). Its function is as follows. Involved in immune evasion, pathogenesis and viral replication. Once cleaved off the polyprotein, is targeted to three destinations: the viral replication cycle, the plasma membrane and the extracellular compartment. Essential for viral replication. Required for formation of the replication complex and recruitment of other non-structural proteins to the ER-derived membrane structures. Excreted as a hexameric lipoparticle that plays a role against host immune response. Antagonizing the complement function. Binds to the host macrophages and dendritic cells. Inhibits signal transduction originating from Toll-like receptor 3 (TLR3). Mediates complement activation, which may contribute to the pathogenesis of the vascular leakage that occurs in severe dengue disease. Activates autophagy through the AMPK/ERK/mTOR signaling pathway. Mechanistically, acts as the assembly platform for STK11-AMPK interactions and promotes STK11-AMPK interactions. In turn, promotes phosphorylation of the AMPK kinase structural domain and activates AMPK, thereby positively regulating the AMPK/ERK/mTOR signaling pathway and inducing autophagy. Functionally, component of the viral RNA replication complex that functions in virion assembly and antagonizes the host immune response. In terms of biological role, required cofactor for the serine protease function of NS3. May have membrane-destabilizing activity and form viroporins. Displays three enzymatic activities: serine protease, NTPase and RNA helicase. NS3 serine protease, in association with NS2B, performs its autocleavage and cleaves the polyprotein at dibasic sites in the cytoplasm: C-prM, NS2A-NS2B, NS2B-NS3, NS3-NS4A, NS4A-2K and NS4B-NS5. NS3 RNA helicase binds RNA and unwinds dsRNA in the 3' to 5' direction. Its function is as follows. Regulates the ATPase activity of the NS3 helicase activity. NS4A allows NS3 helicase to conserve energy during unwinding. Plays a role in the inhibition of the host innate immune response. Interacts with host MAVS and thereby prevents the interaction between RIGI and MAVS. In turn, IFN-beta production is impaired. Interacts with host AUP1 which mediates induction of lipophagy in host cells and facilitates production of virus progeny particles. Functionally, functions as a signal peptide for NS4B and is required for the interferon antagonism activity of the latter. In terms of biological role, induces the formation of ER-derived membrane vesicles where the viral replication takes place. Inhibits interferon (IFN)-induced host STAT1 phosphorylation and nuclear translocation, thereby preventing the establishment of cellular antiviral state by blocking the IFN-alpha/beta pathway. Replicates the viral (+) and (-) RNA genome, and performs the capping of genomes in the cytoplasm. NS5 methylates viral RNA cap at guanine N-7 and ribose 2'-O positions. Besides its role in RNA genome replication, also prevents the establishment of cellular antiviral state by blocking the interferon-alpha/beta (IFN-alpha/beta) signaling pathway. Inhibits host TYK2 and STAT2 phosphorylation, thereby preventing activation of JAK-STAT signaling pathway. May reduce immune responses by preventing the recruitment of the host PAF1 complex to interferon-responsive genes. The protein is Genome polyprotein of Aedes aegypti (Yellowfever mosquito).